Here is an 840-residue protein sequence, read N- to C-terminus: Urease (840 aa).

Residues 402 to 840 (GAIDCHVHYI…VPLSRNYFLF (439 aa)) form the Urease domain. His-407, His-409, and Lys-490 together coordinate Ni(2+). Position 490 is an N6-carboxylysine (Lys-490). His-492 contacts substrate. His-519 and His-545 together coordinate Ni(2+). Residue His-593 is the Proton donor of the active site. Residue Asp-633 coordinates Ni(2+).

This sequence in the C-terminal section; belongs to the metallo-dependent hydrolases superfamily. Urease alpha subunit family. Homohexamer. Other oligomeric forms may exist depending on pH and presence of salts. Ni cation serves as cofactor. Carboxylation allows a single lysine to coordinate two nickel ions.

The enzyme catalyses urea + 2 H2O + H(+) = hydrogencarbonate + 2 NH4(+). The protein operates within nitrogen metabolism; urea degradation; CO(2) and NH(3) from urea (urease route): step 1/1. P-hydroxymercuribenzoate irreversibly abolishes ureolytic activity, but does not inhibit the ability to activate platelets. Also inhibited by acetohydroxamic acid (AHA), a chelator of Ni2+ and Zn2+ ions. Functionally, urea hydrolase involved in nitrogen recycling from ureide, purine, and arginine catabolism. Is known to be highly toxic and lethal when given by intravenous route, producing convulsions and other signs of central nervous system intoxication associated with the high levels of ammonia formed in the blood of mice and rabbits. Is neurotoxic in mammals, when directly injected into hippocampus. It may induce seizures by acting at a neuronal network level, thereby disturbing electroencephalographic rhythms and causing metabolic alterations in key areas related to epileptogenesis and to neurogenic pulmonary edema. It increases calcium influx and neuronal firing rate in the hippocampus. Is able to insert itself into lipid bilayers, altering physicochemical properties of artificial membranes, and forming cation-selective ion channels. In vitro, has the ability to induce platelet aggregation, platelet granules secretion and release of ATP. In contrast to canatoxin, another urease from C.ensiformis, is not lethal to mice when intraperitoneally injected. This is Urease from Canavalia ensiformis (Jack bean).